The primary structure comprises 366 residues: tRNA 2-selenouridine synthase (366 aa).

The 124-residue stretch at 12–135 (FLNDVPMMDA…MRTFLLDTLH (124 aa)) folds into the Rhodanese domain. Catalysis depends on C95, which acts as the S-selanylcysteine intermediate.

Belongs to the SelU family. As to quaternary structure, monomer.

It carries out the reaction 5-methylaminomethyl-2-thiouridine(34) in tRNA + selenophosphate + (2E)-geranyl diphosphate + H2O + H(+) = 5-methylaminomethyl-2-selenouridine(34) in tRNA + (2E)-thiogeraniol + phosphate + diphosphate. The catalysed reaction is 5-methylaminomethyl-2-thiouridine(34) in tRNA + (2E)-geranyl diphosphate = 5-methylaminomethyl-S-(2E)-geranyl-thiouridine(34) in tRNA + diphosphate. It catalyses the reaction 5-methylaminomethyl-S-(2E)-geranyl-thiouridine(34) in tRNA + selenophosphate + H(+) = 5-methylaminomethyl-2-(Se-phospho)selenouridine(34) in tRNA + (2E)-thiogeraniol. The enzyme catalyses 5-methylaminomethyl-2-(Se-phospho)selenouridine(34) in tRNA + H2O = 5-methylaminomethyl-2-selenouridine(34) in tRNA + phosphate. Its function is as follows. Involved in the post-transcriptional modification of the uridine at the wobble position (U34) of tRNA(Lys), tRNA(Glu) and tRNA(Gln). Catalyzes the conversion of 2-thiouridine (S2U-RNA) to 2-selenouridine (Se2U-RNA). Acts in a two-step process involving geranylation of 2-thiouridine (S2U) to S-geranyl-2-thiouridine (geS2U) and subsequent selenation of the latter derivative to 2-selenouridine (Se2U) in the tRNA chain. The sequence is that of tRNA 2-selenouridine synthase from Pseudomonas savastanoi pv. phaseolicola (strain 1448A / Race 6) (Pseudomonas syringae pv. phaseolicola (strain 1448A / Race 6)).